Consider the following 166-residue polypeptide: Thiol peroxidase (166 aa).

The region spanning 18-166 (LKVGDKAPDV…NYEALLKVLK (149 aa)) is the Thioredoxin domain. The Cysteine sulfenic acid (-SOH) intermediate role is filled by Cys-60. Cys-60 and Cys-94 are disulfide-bonded.

This sequence belongs to the peroxiredoxin family. Tpx subfamily. As to quaternary structure, homodimer.

The catalysed reaction is a hydroperoxide + [thioredoxin]-dithiol = an alcohol + [thioredoxin]-disulfide + H2O. Functionally, thiol-specific peroxidase that catalyzes the reduction of hydrogen peroxide and organic hydroperoxides to water and alcohols, respectively. Plays a role in cell protection against oxidative stress by detoxifying peroxides. This Helicobacter pylori (strain ATCC 700392 / 26695) (Campylobacter pylori) protein is Thiol peroxidase.